The following is a 562-amino-acid chain: Protein wntless (562 aa).

The Cytoplasmic segment spans residues 1–13; it reads MSGTILENLSGRK. A helical transmembrane segment spans residues 14-34; it reads LSILVSSLMLCQVACFLMGGL. Topologically, residues 35–239 are lumenal; the sequence is YAPVPAGHQT…AIHQNGGFTQ (205 aa). 2 N-linked (GlcNAc...) asparagine glycosylation sites follow: Asn58 and Asn103. The chain crosses the membrane as a helical span at residues 240–260; the sequence is VWLLLKTLLFPFVVGIMIWFW. Residues 261 to 270 lie on the Cytoplasmic side of the membrane; it reads RRVHILQRSP. Residues 271–291 form a helical membrane-spanning segment; that stretch reads ALLEYMLLYLGGALSFLNLPL. The Lumenal segment spans residues 292–311; the sequence is EYLTLSIEMPYMLLLSDVRQ. A helical membrane pass occupies residues 312 to 332; that stretch reads GIFYAMLLSFWLVFAGEHMLI. The Cytoplasmic portion of the chain corresponds to 333–344; sequence QDTPNKSTIRSR. Residues 345 to 365 traverse the membrane as a helical segment; sequence YWKHLSAVVVGCISLFVFDIC. Residues 366–390 lie on the Lumenal side of the membrane; sequence ERGVQLRNPFYSIWTTPLGAKVAMS. A helical membrane pass occupies residues 391-411; that stretch reads FIVLAGVSAAIYFLFLCFMVW. Residues 412 to 441 lie on the Cytoplasmic side of the membrane; sequence KVFKDIGDKRTSLPSMSQARRLHYEGLIYR. The helical transmembrane segment at 442–462 threads the bilayer; sequence FKFLMLATLLCAGLTVAGFIM. The Lumenal portion of the chain corresponds to 463 to 482; sequence GQMAEGHWKWNEDIEIQLTS. Residues 483 to 503 form a helical membrane-spanning segment; it reads AFLTGVYGMWNIYIFALIILY. The Cytoplasmic segment spans residues 504–562; that stretch reads APSHKQWPTMRHSDETTQSNENIVASAASEEIEFSNLPSDSNPSEISSLTSFTRKVAFD.

It belongs to the wntless family. Interacts with wg; in the Golgi. Interacts with Vps35, a component of the retromer complex; wls stability is regulated by Vps35.

It localises to the presynaptic cell membrane. The protein resides in the postsynaptic cell membrane. The protein localises to the cell membrane. It is found in the endoplasmic reticulum membrane. Its subcellular location is the endosome membrane. It localises to the golgi apparatus membrane. Its function is as follows. A segment polarity gene required for wingless (wg)-dependent patterning processes, acting in both wg-sending cells and wg-target cells. In non-neuronal cells wls directs wg secretion. The wls traffic loop encompasses the Golgi, the cell surface, an endocytic compartment and a retrograde route leading back to the Golgi, and involves clathrin-mediated endocytosis and the retromer complex (a conserved protein complex consisting of Vps35 and Vps26). In neuronal cells (the larval motorneuron NMJ), the wg signal moves across the synapse via the release of wls-containing exosome-like vesicles. Postsynaptic wls is required for the trafficking of fz2 through the fz2-interacting protein Grip. The sequence is that of Protein wntless from Drosophila virilis (Fruit fly).